Consider the following 265-residue polypeptide: Tryptophan 2,3-dioxygenase (265 aa).

Residues 38 to 42 and Arg104 contribute to the substrate site; that span reads FIVVH. His223 contacts heme. Thr237 contacts substrate.

The protein belongs to the tryptophan 2,3-dioxygenase family. As to quaternary structure, homotetramer. The cofactor is heme.

It catalyses the reaction L-tryptophan + O2 = N-formyl-L-kynurenine. The protein operates within amino-acid degradation; L-tryptophan degradation via kynurenine pathway; L-kynurenine from L-tryptophan: step 1/2. In terms of biological role, heme-dependent dioxygenase that catalyzes the oxidative cleavage of the L-tryptophan (L-Trp) pyrrole ring and converts L-tryptophan to N-formyl-L-kynurenine. Catalyzes the oxidative cleavage of the indole moiety. This is Tryptophan 2,3-dioxygenase from Anaeromyxobacter sp. (strain K).